The sequence spans 375 residues: Delta(9) fatty acid conjugase-like enzyme (375 aa).

Helical transmembrane passes span 38–58 and 66–86; these read LSLS…LFYV and LPYS…GAFL. Residues 94 to 98 carry the Histidine box-1 motif; sequence HECGH. Positions 130 to 134 match the Histidine box-2 motif; sequence HRNHH. 3 helical membrane passes run 168-188, 219-239, and 241-261; these read FGLV…YLIF, VFFS…IAIA, and GAML…AFIF. The Histidine box-3 motif lies at 307-311; that stretch reads HVVHH.

The protein belongs to the fatty acid desaturase type 1 family.

It is found in the membrane. In terms of biological role, involved in the biosynthesis of dimorphecolic acid (9-OH-18:2(10E,12E)). Catalyzes the formation of the C-9 hydroxyl group and the (E)-delta(10) double bond from the trans-linoleic acid (16:2(9Z,12E)) produced by FAD2-1. Very limited activity with cis-linoleic acid (16:2(9Z,12Z)). This is Delta(9) fatty acid conjugase-like enzyme from Dimorphotheca sinuata (African daisy).